Here is a 155-residue protein sequence, read N- to C-terminus: uncharacterized protein (155 aa).

An N-terminal signal peptide occupies residues 1–19; the sequence is MPLSKTLVQKLQQAGMAIA.

This is an uncharacterized protein from Haemophilus influenzae (strain ATCC 51907 / DSM 11121 / KW20 / Rd).